Reading from the N-terminus, the 39-residue chain is Photosystem II reaction center protein J (39 aa).

Residues Ile-7–Tyr-27 form a helical membrane-spanning segment.

It belongs to the PsbJ family. As to quaternary structure, PSII is composed of 1 copy each of membrane proteins PsbA, PsbB, PsbC, PsbD, PsbE, PsbF, PsbH, PsbI, PsbJ, PsbK, PsbL, PsbM, PsbT, PsbX, PsbY, PsbZ, Psb30/Ycf12, at least 3 peripheral proteins of the oxygen-evolving complex and a large number of cofactors. It forms dimeric complexes.

It localises to the plastid. The protein resides in the chloroplast thylakoid membrane. Functionally, one of the components of the core complex of photosystem II (PSII). PSII is a light-driven water:plastoquinone oxidoreductase that uses light energy to abstract electrons from H(2)O, generating O(2) and a proton gradient subsequently used for ATP formation. It consists of a core antenna complex that captures photons, and an electron transfer chain that converts photonic excitation into a charge separation. In Welwitschia mirabilis (Tree tumbo), this protein is Photosystem II reaction center protein J.